The primary structure comprises 559 residues: MFPFGPHSPGGDGSAGAGAEEPTPHEGQAAATGPPSPLHPGADATHPPPPARSPRRPGAPSLSPAPRSGELGLPGAPESSTASAPGEPSPPSPPCRRPGPDCRAKSRGRHGLGAGLGGPGARLFGWLKERSLGRGLFVDPARDNFRTMTSLYGSIHPADSVYLSTRTHGAVFNLEYSPDGSVLTVACEQTEVLLFDPISSKHIKTLSEAHEDCVNNIRFLDNRLFATCSDDTTIALWDLRKLNTKVCTLHGHTSWVKNIEYDTNTRLLVTSGFDGNVIIWDTNRYTEDGCPHKKFFHTRFLMRMRLTPDCSKMLISTSSGYLLILHDLDLTKSLEVGSYPILRARRTTSSSDLTTSSSSSGPRVSGSPCHHSDSNSSEKHMSRASQREGVSPRNSLEVVTPEVLGESDHGNCITSLQLHPKGWATLLRCSSNSDDEECTCVYEFQEGAPVRPVSPRCSLRLTHYIEEANVGRGYIKELCFSPDGRMISSPHGYGIRLLGFDKQCSELVDCLPKEASPLRVIRSLYSHNDVVLTTKFSPTHCQIASGCLSGRVSLYQPKF.

The tract at residues 1–119 (MFPFGPHSPG…HGLGAGLGGP (119 aa)) is disordered. Phosphoserine is present on residues Ser-53, Ser-63, Ser-89, and Ser-92. The span at 56 to 86 (RPGAPSLSPAPRSGELGLPGAPESSTASAPG) shows a compositional bias: low complexity. A compositionally biased stretch (pro residues) spans 87-97 (EPSPPSPPCRR). Omega-N-methylarginine is present on Arg-134. 4 WD repeats span residues 166–205 (RTHG…HIKT), 209–247 (AHED…TKVC), 251–290 (GHTS…EDGC), and 296–335 (FHTR…KSLE). Ser-349 is subject to Phosphoserine. Over residues 350-367 (SSDLTTSSSSSGPRVSGS) the composition is skewed to low complexity. Positions 350–396 (SSDLTTSSSSSGPRVSGSPCHHSDSNSSEKHMSRASQREGVSPRNSL) are disordered. Over residues 370–381 (HHSDSNSSEKHM) the composition is skewed to basic and acidic residues. WD repeat units lie at residues 408-448 (DHGN…QEGA), 470-508 (VGRG…SELV), and 526-559 (SHND…QPKF).

Belongs to the WD repeat DCAF10 family. In terms of assembly, interacts with DDB1.

It participates in protein modification; protein ubiquitination. In terms of biological role, may function as a substrate receptor for CUL4-DDB1 E3 ubiquitin-protein ligase complex. This chain is DDB1- and CUL4-associated factor 10 (DCAF10), found in Homo sapiens (Human).